The following is a 979-amino-acid chain: Probable serine/threonine-protein kinase iksA (979 aa).

10 N-linked (GlcNAc...) asparagine glycosylation sites follow: Asn32, Asn110, Asn120, Asn121, Asn147, Asn155, Asn161, Asn220, Asn231, and Asn243. Residues 207-245 (SKSGVNNNNNNNNNDSTTTNNNNNNNTTPPQQQQQQNSS) form a disordered region. The segment covering 212 to 244 (NNNNNNNNNDSTTTNNNNNNNTTPPQQQQQQNS) has biased composition (low complexity). The Protein kinase domain maps to 261 to 568 (FKEDIKIGSG…ISQILSTHFI (308 aa)). ATP-binding positions include 267–275 (IGSGGFGSV) and Lys293. Asp397 (proton acceptor) is an active-site residue. Residues Asn592, Asn597, Asn615, Asn645, Asn646, Asn663, and Asn699 are each glycosylated (N-linked (GlcNAc...) asparagine). Residues 593–602 (TSVHNTTAST) show a composition bias toward polar residues. The interval 593-666 (TSVHNTTAST…LGNNNNNNTN (74 aa)) is disordered. Low complexity predominate over residues 610-666 (SISTTNSTTSSSSSTATSSSLSSTTIATTSSSNAINNTTATTTTNSNLGNNNNNNTN). Positions 713–727 (NDDIIIDDDDDDDDS) are enriched in acidic residues. The segment at 713 to 793 (NDDIIIDDDD…GNNGIRKALP (81 aa)) is disordered. 2 stretches are compositionally biased toward low complexity: residues 728 to 737 (TNNNDTNNTD) and 753 to 773 (NNKK…SSNK). Asn731 and Asn734 each carry an N-linked (GlcNAc...) asparagine glycan. The helical transmembrane segment at 846–866 (FPSPILLYPLLLLSLIPILVV) threads the bilayer. Residues Asn870 and Asn894 are each glycosylated (N-linked (GlcNAc...) asparagine). The next 2 helical transmembrane spans lie at 912–932 (INTI…VLLP) and 956–976 (FPLL…IFIF).

Belongs to the protein kinase superfamily. Ser/Thr protein kinase family.

Its subcellular location is the membrane. The enzyme catalyses L-seryl-[protein] + ATP = O-phospho-L-seryl-[protein] + ADP + H(+). It catalyses the reaction L-threonyl-[protein] + ATP = O-phospho-L-threonyl-[protein] + ADP + H(+). This chain is Probable serine/threonine-protein kinase iksA (iksA), found in Dictyostelium discoideum (Social amoeba).